The primary structure comprises 342 residues: MRIPDFQQRLADIGAKPRHIGRMTRAWLKGLPLDVGRRQQQAEDFLPLSVREGLPALSLEIDALARLRSEHPAADGSARLLVELGDGQMVESVLLPRDGLCVSSQVGCAVGCVFCMTGKSGLLRQLGSAEIVAQVALARRFRPVKKVVFMGMGEPAHNLDNVLEAIDLLGTEGGIGHKNLVFSTVGDLRVFERLPQQRVKPALALSLHSTDGALRQALLPRAPQIAPEELVELGETYARATGFPIQYQWTLLKGINDNQEEMDGILRLLKGKYAVMNLIPYNSLEDDAYQRPEGERIVQIVRYLHSRGVLTKVRNSAGQDIDGGCGQLRARAEHVLGRRRPR.

Glu-91 serves as the catalytic Proton acceptor. Residues 94–320 enclose the Radical SAM core domain; that stretch reads LLPRDGLCVS…TKVRNSAGQD (227 aa). Cys-101 and Cys-325 are joined by a disulfide. 3 residues coordinate [4Fe-4S] cluster: Cys-108, Cys-112, and Cys-115. Residues 153–154, Ser-183, 206–208, and Asn-282 contribute to the S-adenosyl-L-methionine site; these read GE and SLH. Cys-325 (S-methylcysteine intermediate) is an active-site residue.

This sequence belongs to the radical SAM superfamily. RlmN family. [4Fe-4S] cluster serves as cofactor.

The protein resides in the cytoplasm. The sequence is that of Probable RNA methyltransferase PST_2231 from Stutzerimonas stutzeri (strain A1501) (Pseudomonas stutzeri).